A 1142-amino-acid chain; its full sequence is Zinc finger MYM-type protein 1 (1142 aa).

Lysine 25 participates in a covalent cross-link: Glycyl lysine isopeptide (Lys-Gly) (interchain with G-Cter in SUMO2). MYM-type zinc fingers lie at residues 110-148, 160-203, and 210-245; these read QLFC…PKDV, KTFC…QYEV, and HNLC…SSSL. A Glycyl lysine isopeptide (Lys-Gly) (interchain with G-Cter in SUMO2) cross-link involves residue lysine 284. The segment at 300–331 adopts an MYM-type 4 zinc-finger fold; that stretch reads ELFCSINCFSAYSKAKMESSSVSVVSVVHDTS. Positions 385–396 are enriched in polar residues; sequence KSSPSEPSNAVA. The segment at 385-413 is disordered; it reads KSSPSEPSNAVASSSTEQPSVSPSSSVFS. Positions 397–413 are enriched in low complexity; it reads SSSTEQPSVSPSSSVFS. A TTF-type zinc finger spans residues 452–538; it reads KSRSIKKSCC…YQFCDGAVSD (87 aa).

It is found in the nucleus. The protein is Zinc finger MYM-type protein 1 (ZMYM1) of Homo sapiens (Human).